The primary structure comprises 281 residues: Splicing regulator RBM11 (281 aa).

Residues 10 to 87 (RTVFVGNLEA…RPINVQYRFG (78 aa)) form the RRM domain. The tract at residues 184-281 (PSSYKWTHQQ…FRKSKKKKRY (98 aa)) is disordered. 2 stretches are compositionally biased toward polar residues: residues 187–217 (YKWT…SSLN) and 229–242 (YKWT…SDLY). The short motif at 245–280 (NKRKRQKQTSDSDSSTDNNRGNECSQKFRKSKKKKR) is the Bipartite nuclear localization signal element. The segment covering 271–281 (KFRKSKKKKRY) has biased composition (basic residues).

In terms of assembly, homodimer. In terms of tissue distribution, expressed in brain, hippocampus, prefrontal cortex, cerebellum, spinal cord, testis, mammary gland, spleen and kidney. Also expressed in fetal brain.

It is found in the nucleus. It localises to the nucleoplasm. The protein localises to the nucleus speckle. Tissue-specific splicing factor with potential implication in the regulation of alternative splicing during neuron and germ cell differentiation. Antagonizes SRSF1-mediated BCL-X splicing. May affect the choice of alternative 5' splice sites by binding to specific sequences in exons and antagonizing the SR protein SRSF1. The polypeptide is Splicing regulator RBM11 (Homo sapiens (Human)).